We begin with the raw amino-acid sequence, 548 residues long: Rop guanine nucleotide exchange factor 1 (548 aa).

Positions 1–12 (MGSLSSEEDDEV) are enriched in acidic residues. Residues 1-38 (MGSLSSEEDDEVSSERCGSYSPSADISESESSSSFSCH) form a disordered region. The segment covering 19–36 (SYSPSADISESESSSSFS) has biased composition (low complexity). The PRONE domain occupies 81-462 (DKQPDNDLSE…DAMRRSISVT (382 aa)). Positions 458 to 548 (SISVTESLSL…RVTGVTPERD (91 aa)) are involved in auto-inhibition. Phosphoserine is present on residues Ser-460 and Ser-480.

Interacts with ARAC10/ROP11 and FER. Forms a complex with ARAC11/ROP1 and PRK2. Interacts in vitro (via PRONE domain) with PRK1, PRK2, PRK3 and PRK4. The C-terminal region is also important for the interaction with PRK2. Phosphorylated at Ser-460 and Ser-480 by PRK2. As to expression, expressed in roots, cotyledons, leaves, stems, sepals, petals, anthers, pollen grains, stigmas and siliques.

It localises to the cytoplasm. The protein resides in the cytosol. It is found in the cell membrane. Phosphorylation at Ser-460 and Ser-480 by PRK2 releases ROPGEF1 auto-inhibition, thereby activating ROPGEF1, which in turn activates ARAC11/ROP1. Its function is as follows. Guanine-nucleotide exchange factor (GEF) that acts as an activator of Rop (Rho of plants) GTPases by promoting the exchange of GDP for GTP. Acts downstream of PRK2 in the control of polarized pollen tube growth by activating ARAC11/ROP1. In association with ROPGEF4, acts as a specific regulator of ARAC10/ROP11 function in ABA-mediated stomatal closure. May play a role in the Rac/Rop-signaling pathway that controls ROS-mediated root hair development. The chain is Rop guanine nucleotide exchange factor 1 (ROPGEF1) from Arabidopsis thaliana (Mouse-ear cress).